A 508-amino-acid polypeptide reads, in one-letter code: 3-octaprenyl-4-hydroxybenzoate carboxy-lyase (508 aa).

Mn(2+) is bound at residue N172. Prenylated FMN is bound by residues 175–177 (IYR), 189–191 (RWL), and 194–195 (RG). Mn(2+) is bound at residue E238. D287 acts as the Proton donor in catalysis. The segment at 483 to 508 (GEYGIATPPPPPRHSPPSDERGHDDV) is disordered. A compositionally biased stretch (basic and acidic residues) spans 498 to 508 (PPSDERGHDDV).

This sequence belongs to the UbiD family. Homohexamer. Prenylated FMN serves as cofactor. Mn(2+) is required as a cofactor.

Its subcellular location is the cell membrane. It catalyses the reaction a 4-hydroxy-3-(all-trans-polyprenyl)benzoate + H(+) = a 2-(all-trans-polyprenyl)phenol + CO2. It participates in cofactor biosynthesis; ubiquinone biosynthesis. In terms of biological role, catalyzes the decarboxylation of 3-octaprenyl-4-hydroxy benzoate to 2-octaprenylphenol, an intermediate step in ubiquinone biosynthesis. The chain is 3-octaprenyl-4-hydroxybenzoate carboxy-lyase from Chromohalobacter salexigens (strain ATCC BAA-138 / DSM 3043 / CIP 106854 / NCIMB 13768 / 1H11).